A 350-amino-acid chain; its full sequence is MDFELEPSLEELIKQDTLKWIFVGGKGGVGKTTTSSSIAVQLALQHPNDEFLLISTDPAHNLSDAFCQKFGKDARKVEGLSNLSCMEIDPEAAMSDLQQQAQQYNNDPNDPLKSIMNDMTGSIPGIDEALSFMEVLKHIKNQKVNESDDSKDKISYRTIIFDTAPTGHTLRFLQLPSTLQKLLGKFQQLSGKLGPMMSMLGGGGQGQQDMFAKLNEVQKNVEEVNEQFTNPDLTTFVCVCISEFLSLYETERMIQELMSYQMDVNSIVVNQLLFADDDENPCKRCVARWKMQKKYLDQMAELYEDYHLVKMPLLGSEIRGVENLKKFSKFLIKPYDPKVDRGIITDLKEQ.

Lys-26 to Thr-33 provides a ligand contact to ATP. Asp-57 is an active-site residue. Residues Glu-243 and Asn-270 each contribute to the ATP site. Zn(2+)-binding residues include Cys-282 and Cys-285.

This sequence belongs to the arsA ATPase family. In terms of assembly, homodimer. Component of the Golgi to ER traffic (GET) complex, which is composed of GET1, GET2 and GET3. Within the complex, GET1 and GET2 form a heterotetramer which is stabilized by phosphatidylinositol binding and which binds to the GET3 homodimer. Interacts with the chloride channel protein GEF1.

The protein resides in the cytoplasm. It is found in the endoplasmic reticulum. It localises to the golgi apparatus. Its function is as follows. ATPase required for the post-translational delivery of tail-anchored (TA) proteins to the endoplasmic reticulum. Recognizes and selectively binds the transmembrane domain of TA proteins in the cytosol. This complex then targets to the endoplasmic reticulum by membrane-bound receptors GET1 and GET2, where the tail-anchored protein is released for insertion. This process is regulated by ATP binding and hydrolysis. ATP binding drives the homodimer towards the closed dimer state, facilitating recognition of newly synthesized TA membrane proteins. ATP hydrolysis is required for insertion. Subsequently, the homodimer reverts towards the open dimer state, lowering its affinity for the GET1-GET2 receptor, and returning it to the cytosol to initiate a new round of targeting. Cooperates with the HDEL receptor ERD2 to mediate the ATP-dependent retrieval of resident ER proteins that contain a C-terminal H-D-E-L retention signal from the Golgi to the ER. Involved in low-level resistance to the oxyanions arsenite and arsenate, and in heat tolerance. This chain is ATPase GET3, found in Candida albicans (strain SC5314 / ATCC MYA-2876) (Yeast).